The chain runs to 883 residues: Phosphoenolpyruvate carboxylase (883 aa).

Active-site residues include His-138 and Lys-546.

Belongs to the PEPCase type 1 family. Mg(2+) serves as cofactor.

The catalysed reaction is oxaloacetate + phosphate = phosphoenolpyruvate + hydrogencarbonate. Functionally, forms oxaloacetate, a four-carbon dicarboxylic acid source for the tricarboxylic acid cycle. The chain is Phosphoenolpyruvate carboxylase from Salmonella arizonae (strain ATCC BAA-731 / CDC346-86 / RSK2980).